Reading from the N-terminus, the 908-residue chain is Translation initiation factor IF-2 (908 aa).

Disordered regions lie at residues 123-154 (EEPPILQPELPTEEKEELEVIESPQAPQEELK) and 212-278 (KKEP…VSEK). Positions 407 to 577 (ERAPIVTIMG…LFEAELLELK (171 aa)) constitute a tr-type G domain. The interval 416-423 (GHVDHGKT) is G1. 416 to 423 (GHVDHGKT) lines the GTP pocket. The segment at 441–445 (GITQH) is G2. Residues 463 to 466 (DTPG) are G3. GTP contacts are provided by residues 463–467 (DTPGH) and 517–520 (NKMD). The G4 stretch occupies residues 517–520 (NKMD). Residues 553 to 555 (SAI) are G5.

This sequence belongs to the TRAFAC class translation factor GTPase superfamily. Classic translation factor GTPase family. IF-2 subfamily.

It is found in the cytoplasm. One of the essential components for the initiation of protein synthesis. Protects formylmethionyl-tRNA from spontaneous hydrolysis and promotes its binding to the 30S ribosomal subunits. Also involved in the hydrolysis of GTP during the formation of the 70S ribosomal complex. This Amoebophilus asiaticus (strain 5a2) protein is Translation initiation factor IF-2.